Here is a 952-residue protein sequence, read N- to C-terminus: Calsyntenin-1 (952 aa).

The first 28 residues, 1 to 28 (MLRRPAPALARAVRLLLAGLLYGGGVWA), serve as a signal peptide directing secretion. Residues 29-830 (ARVNKHKPWL…PHPFAVVPST (802 aa)) lie on the Extracellular side of the membrane. Cadherin domains are found at residues 38–154 (LEPT…APVF) and 155–255 (KEKS…SPGW). N356 is a glycosylation site (N-linked (GlcNAc...) asparagine). The chain crosses the membrane as a helical span at residues 831 to 851 (ATVVIVVCVSFLVFMIILGVF). The Cytoplasmic portion of the chain corresponds to 852–952 (RIRAAHQRTM…LEWDYSTLSY (101 aa)). Residues 886–952 (METYEDQHSS…LEWDYSTLSY (67 aa)) are disordered. The span at 896-930 (EEEEEEEEEEESEDGEEEEDITSAESESSEEEEGG) shows a compositional bias: acidic residues. The segment covering 934–952 (GQNTTRQQQLEWDYSTLSY) has biased composition (polar residues).

Belongs to the calsyntenin family. In terms of assembly, directly interacts with APBA2. Forms a tripartite complex with APBA2 and APP. Interacts with KLC1. Interacts with APBB1; this interaction stabilizes AlcICD metabolism. As to quaternary structure, interacts with PSEN1. In terms of processing, proteolytically processed under normal cellular conditions. A primary zeta-cleavage generates a large extracellular (soluble) N-terminal domain (sAlc) and a short C-terminal transmembrane fragment (CTF1). A secondary cleavage catalyzed by presenilin gamma-secretase within the transmembrane domain releases the beta-Alc-alpha chain in the extracellular milieu and produces an intracellular fragment (AlcICD). This processing is strongly suppressed in the tripartite complex formed with APBA2 and APP, which seems to prevent the association with PSEN1. In terms of tissue distribution, preferentially expressed in the retina and brain.

The protein localises to the postsynaptic cell membrane. Its subcellular location is the endoplasmic reticulum membrane. It localises to the golgi apparatus membrane. It is found in the cell projection. The protein resides in the neuron projection. The protein localises to the nucleus. Functionally, postsynaptic adhesion molecule that binds to presynaptic neurexins to mediate both excitatory and inhibitory synapse formation. Promotes synapse development by acting as a cell adhesion molecule at the postsynaptic membrane, which associates with neurexin-alpha at the presynaptic membrane. Also functions as a cargo in axonal anterograde transport by acting as a molecular adapter that promotes KLC1 association with vesicles. Complex formation with APBA2 and APP, stabilizes APP metabolism and enhances APBA2-mediated suppression of beta-APP40 secretion, due to the retardation of intracellular APP maturation. Its function is as follows. As intracellular fragment AlcICD, suppresses APBB1-dependent transactivation stimulated by APP C-terminal intracellular fragment (AICD), most probably by competing with AICD for APBB1-binding. In complex with APBA2 and C99, a C-terminal APP fragment, abolishes C99 interaction with PSEN1 and thus APP C99 cleavage by gamma-secretase, most probably through stabilization of the direct interaction between APBA2 and APP. The protein is Calsyntenin-1 (Clstn1) of Rattus norvegicus (Rat).